Here is a 564-residue protein sequence, read N- to C-terminus: NAC domain-containing protein 16 (564 aa).

One can recognise an NAC domain in the interval 16–166; the sequence is SAPGFRFHPT…YYALYKLYKK (151 aa). The DNA-binding element occupies 115 to 172; the sequence is VGLKKTLVFYRGRAPNGERTDWVMHEYTMDEEELGRCKNAKEYYALYKLYKKSGAGPK. Residues 535–555 form a helical membrane-spanning segment; that stretch reads FLLLSIMGALCAIFWVFKATV.

In terms of tissue distribution, expressed in roots, rosette leaves, shoot apex, stems and flowers.

It is found in the membrane. It localises to the nucleus. Its function is as follows. Transcriptional activator activated by proteolytic cleavage through regulated intramembrane proteolysis (RIP). Transcriptional activator that promotes leaf senescence by up-regulating senescence-associated genes in response to developmental and stress-induced senescence signals. Functions in salt and oxidative stress-responsive signaling pathways. Binds to the promoter of NAC029/NAP and NAC059/ORS1 genes. The protein is NAC domain-containing protein 16 of Arabidopsis thaliana (Mouse-ear cress).